Here is a 138-residue protein sequence, read N- to C-terminus: Acidic phospholipase A2 beta (138 aa).

Positions 1 to 16 (MRTLWIVAVLLLGVEG) are cleaved as a signal peptide. 7 disulfides stabilise this stretch: Cys-42-Cys-131, Cys-44-Cys-60, Cys-59-Cys-111, Cys-65-Cys-138, Cys-66-Cys-104, Cys-73-Cys-97, and Cys-91-Cys-102. Ca(2+)-binding residues include Tyr-43, Gly-45, and Gly-47. His-63 is an active-site residue. Asp-64 is a binding site for Ca(2+). Asp-105 is a catalytic residue.

The protein belongs to the phospholipase A2 family. Group II subfamily. D49 sub-subfamily. Dimer. The cofactor is Ca(2+). Expressed by the venom gland.

The protein localises to the secreted. It carries out the reaction a 1,2-diacyl-sn-glycero-3-phosphocholine + H2O = a 1-acyl-sn-glycero-3-phosphocholine + a fatty acid + H(+). Functionally, PLA2 catalyzes the calcium-dependent hydrolysis of the 2-acyl groups in 3-sn-phosphoglycerides. The chain is Acidic phospholipase A2 beta from Crotalus adamanteus (Eastern diamondback rattlesnake).